Here is a 102-residue protein sequence, read N- to C-terminus: Small ribosomal subunit protein uS10 (102 aa).

The protein belongs to the universal ribosomal protein uS10 family. In terms of assembly, part of the 30S ribosomal subunit.

Its function is as follows. Involved in the binding of tRNA to the ribosomes. In Rhodopseudomonas palustris (strain BisB18), this protein is Small ribosomal subunit protein uS10.